The following is a 520-amino-acid chain: Dynein axonemal assembly factor 8 (520 aa).

4 disordered regions span residues 93 to 202, 217 to 256, 328 to 366, and 388 to 520; these read PVLV…LRQE, RDAC…EGPP, CARK…QLAQ, and DHLS…LEQL. A compositionally biased stretch (basic and acidic residues) spans 111–125; that stretch reads RTKDASSQEGRDPGR. S161 is subject to Phosphoserine. The residue at position 351 (S351) is a Phosphoserine. Residues 401 to 410 show a composition bias toward acidic residues; the sequence is DSEEEEEEEM. The span at 420-437 shows a compositional bias: polar residues; sequence SPSSLGLRTCTGKSQLLQ.

In terms of tissue distribution, expressed in respiratory ciliated cells (at protein level).

It localises to the dynein axonemal particle. The protein localises to the cytoplasm. Its function is as follows. In cyliated cells, dynein axonemal particle-specific protein required for deployment of ODA to the axoneme. Interacts with outer dynein arm (ODA) subunits. The chain is Dynein axonemal assembly factor 8 from Homo sapiens (Human).